Reading from the N-terminus, the 231-residue chain is ATP phosphoribosyltransferase (231 aa).

Belongs to the ATP phosphoribosyltransferase family. Short subfamily. As to quaternary structure, heteromultimer composed of HisG and HisZ subunits.

The protein resides in the cytoplasm. It catalyses the reaction 1-(5-phospho-beta-D-ribosyl)-ATP + diphosphate = 5-phospho-alpha-D-ribose 1-diphosphate + ATP. Its pathway is amino-acid biosynthesis; L-histidine biosynthesis; L-histidine from 5-phospho-alpha-D-ribose 1-diphosphate: step 1/9. Catalyzes the condensation of ATP and 5-phosphoribose 1-diphosphate to form N'-(5'-phosphoribosyl)-ATP (PR-ATP). Has a crucial role in the pathway because the rate of histidine biosynthesis seems to be controlled primarily by regulation of HisG enzymatic activity. In Brucella suis biovar 1 (strain 1330), this protein is ATP phosphoribosyltransferase.